The chain runs to 138 residues: Transcription antitermination protein NusB (138 aa).

This sequence belongs to the NusB family.

In terms of biological role, involved in transcription antitermination. Required for transcription of ribosomal RNA (rRNA) genes. Binds specifically to the boxA antiterminator sequence of the ribosomal RNA (rrn) operons. This Blochmanniella floridana protein is Transcription antitermination protein NusB.